A 311-amino-acid polypeptide reads, in one-letter code: Glutaminase (311 aa).

Residues S69, N120, E164, N171, Y195, Y247, and V265 each coordinate substrate.

Belongs to the glutaminase family. In terms of assembly, homotetramer.

The enzyme catalyses L-glutamine + H2O = L-glutamate + NH4(+). The polypeptide is Glutaminase (Colwellia psychrerythraea (strain 34H / ATCC BAA-681) (Vibrio psychroerythus)).